The primary structure comprises 372 residues: Flagellar P-ring protein (372 aa).

The first 26 residues, 1–26, serve as a signal peptide directing secretion; it reads MNLSSLPFRLLAAAVALCAIAAPASA.

The protein belongs to the FlgI family. As to quaternary structure, the basal body constitutes a major portion of the flagellar organelle and consists of four rings (L,P,S, and M) mounted on a central rod.

Its subcellular location is the periplasm. It is found in the bacterial flagellum basal body. Assembles around the rod to form the L-ring and probably protects the motor/basal body from shearing forces during rotation. In Xanthomonas axonopodis pv. citri (strain 306), this protein is Flagellar P-ring protein.